A 246-amino-acid polypeptide reads, in one-letter code: Phosphonates import ATP-binding protein PhnC (246 aa).

Residues 2–246 form the ABC transporter domain; sequence IKFENVSKIY…ILDEVYRKEA (245 aa). 35 to 42 serves as a coordination point for ATP; it reads GTSGAGKS.

It belongs to the ABC transporter superfamily. Phosphonates importer (TC 3.A.1.9.1) family. In terms of assembly, the complex is composed of two ATP-binding proteins (PhnC), two transmembrane proteins (PhnE) and a solute-binding protein (PhnD).

The protein localises to the cell membrane. It carries out the reaction phosphonate(out) + ATP + H2O = phosphonate(in) + ADP + phosphate + H(+). Part of the ABC transporter complex PhnCDE involved in phosphonates import. Responsible for energy coupling to the transport system. The polypeptide is Phosphonates import ATP-binding protein PhnC (Lactococcus lactis subsp. lactis (strain IL1403) (Streptococcus lactis)).